The sequence spans 202 residues: Type II restriction enzyme MthZI (202 aa).

It catalyses the reaction Endonucleolytic cleavage of DNA to give specific double-stranded fragments with terminal 5'-phosphates.. A P subtype restriction enzyme that recognizes the double-stranded sequence 5'-CTAG-3' and cleaves after C-1. The sequence is that of Type II restriction enzyme MthZI from Methanothermobacter thermautotrophicus (Methanobacterium thermoformicicum).